We begin with the raw amino-acid sequence, 527 residues long: MATAWVATALRSAAAARRLRSPGGPGGSRRLSGSARRRGAKSASPGRRLSTARAHAEDAEGAKGRVQSPAVEEPSWTPLPTPLESPAPPAGRSLVQRDIQAFLNQCGASPGEARHWLTQFQTCYHSVDKPFAVMEVDEEVIRCPQAVSRLAFALAFLQRMDMKPLVVLGLPTPTAPSGCLSFWEAKAQLAQSCKVLVDELRHNAATAVPFFGGGSVLSAAEPAPHASYGGIVAVETDLLQWCLESNSIPILCPIGETAARRSVLLDSLEVTASLAKALQPTKIIFLNNSGGLRNNSQKILSNVNLPADLDLVTNAEWLSIKERQQIRLIVDVLSRLPHYSSAVITAASTLLTELFSNKGCGTLFKNAERMLRVRNLDSLDQGRLVNLVNASFGKKLREDYLESLRPRLHSIYVSEGYNAAAILTVEPVLGGTPYLDKFVVSSSRQGQGSGQMLWECLRRDLQTLFWRSRVTNPINPWYFKHSDGSFSNKQWIFFWFGLADIRDSYELVNHAKGLPDSFCKPASDPGS.

The transit peptide at 1 to 18 directs the protein to the mitochondrion; it reads MATAWVATALRSAAAARR. The interval 14–91 is disordered; it reads AAARRLRSPG…PLESPAPPAG (78 aa). The interval 19-369 is amino-acid kinase domain (AAK); the sequence is LRSPGGPGGS…CGTLFKNAER (351 aa). Over residues 54–63 the composition is skewed to basic and acidic residues; the sequence is AHAEDAEGAK. The segment covering 77 to 89 has biased composition (pro residues); sequence TPLPTPLESPAPP. One can recognise an N-acetyltransferase domain in the interval 368–519; sequence ERMLRVRNLD…HAKGLPDSFC (152 aa). Substrate-binding positions include K394, K437, and 467–472; that span reads RSRVTN.

The protein belongs to the acetyltransferase family. In terms of assembly, homodimer. Homotetramer. In terms of processing, probably processed by mitochondrial processing peptidase (MPP). The long form has not yet been isolated. In terms of tissue distribution, highly expressed in the liver and small intestine. Weakly expressed in the kidney, spleen and testis.

Its subcellular location is the mitochondrion matrix. The enzyme catalyses L-glutamate + acetyl-CoA = N-acetyl-L-glutamate + CoA + H(+). Its pathway is amino-acid biosynthesis; L-arginine biosynthesis; N(2)-acetyl-L-ornithine from L-glutamate: step 1/4. With respect to regulation, increased by L-arginine. In terms of biological role, plays a role in the regulation of ureagenesis by producing the essential cofactor N-acetylglutamate (NAG), thus modulating carbamoylphosphate synthase I (CPS1) activity. The polypeptide is N-acetylglutamate synthase, mitochondrial (Nags) (Mus musculus (Mouse)).